Here is a 181-residue protein sequence, read N- to C-terminus: Ribosome-recycling factor (181 aa).

The tract at residues 135–160 (MDDIKKDKDMPEDDARKAEDQTQKLT) is disordered.

It belongs to the RRF family.

It is found in the cytoplasm. Responsible for the release of ribosomes from messenger RNA at the termination of protein biosynthesis. May increase the efficiency of translation by recycling ribosomes from one round of translation to another. This chain is Ribosome-recycling factor, found in Leuconostoc mesenteroides subsp. mesenteroides (strain ATCC 8293 / DSM 20343 / BCRC 11652 / CCM 1803 / JCM 6124 / NCDO 523 / NBRC 100496 / NCIMB 8023 / NCTC 12954 / NRRL B-1118 / 37Y).